A 527-amino-acid chain; its full sequence is MSITSDEVNFLVYRYLQESGFSHSAFTFGIESHISQSNINGTLVPPAALISILQKGLQYVEAEISINEDGTVFDGRPIESLSLIDAVMPDVVQTRQQAFREKLAQQQANAAAAAAAAAATATSTAATTPAAAAQQNPPKNGEATVNGEENGAHAINNHSKPMEIDGDVEIPPSKATVLRGHESEVFICAWNPVSDLLASGSGDSTARIWNLNENSNGGSTQLVLRHCIREGGHDVPSNKDVTSLDWNSDGTLLATGSYDGFARIWTEDGNLASTLGQHKGPIFALKWNKKGNYILSAGVDKTTIIWDAHTGEAKQQFPFHSAPALDVDWQNNTTFASCSTDMCIHVCRLGCDRPVKTFQGHTNEVNAIKWDPSGMLLASCSDDMTLKIWSMKQDACVHDLQAHSKEIYTIKWSPTGPATSNPNSNIMLASASFDSTVRLWDVERGVCIHTLTKHQEPVYSVAFSPDGKYLASGSFDKCVHIWNTQSGSLVHSYRGTGGIFEVCWNARGDKVGASASDGSVCVLDLRK.

Ser2 is modified (N-acetylserine). The 33-residue stretch at 4–36 folds into the LisH domain; it reads TSDEVNFLVYRYLQESGFSHSAFTFGIESHISQ. The F-box-like domain maps to 41-86; sequence GTLVPPAALISILQKGLQYVEAEISINEDGTVFDGRPIESLSLIDA. N6-acetyllysine is present on Lys102. Residues 127–164 are disordered; sequence TTPAAAAQQNPPKNGEATVNGEENGAHAINNHSKPMEI. 8 WD repeats span residues 180–219, 236–275, 277–316, 319–359, 360–399, 402–450, 453–492, and 494–526; these read GHES…NGGS, PSNK…ASTL, QHKG…AKQQ, FHSA…KTFQ, GHTN…CVHD, AHSK…CIHT, KHQE…LVHS, and RGTG…LDLR. A Glycyl lysine isopeptide (Lys-Gly) (interchain with G-Cter in SUMO2) cross-link involves residue Lys290.

It belongs to the WD repeat EBI family. Homotetramer; dimer of dimers. Component of the N-Cor repressor complex, at least composed of NCOR1, NCOR2, HDAC3, TBL1X, TBL1R, CORO2A and GPS2. Component of a E3 ubiquitin ligase complex containing UBE2D1, SIAH1, CACYBP/SIP, SKP1, APC and TBL1X. Interacts with GPS2 (when sumoylated); leading to protect GPS2 against degradation by the proteasome. Probably part of other corepressor complexes, that do not contain NCOR1 and NCOR2. Interacts with histones H2B, H3a and H4. Interacts with MECP2; recruits TBL1X to the heterochromatin foci. Interacts with USP44. As to expression, expressed in the cochlea.

It localises to the nucleus. In terms of biological role, F-box-like protein involved in the recruitment of the ubiquitin/19S proteasome complex to nuclear receptor-regulated transcription units. Plays an essential role in transcription activation mediated by nuclear receptors. Probably acts as integral component of corepressor complexes that mediates the recruitment of the 19S proteasome complex, leading to the subsequent proteasomal degradation of transcription repressor complexes, thereby allowing cofactor exchange. In Mus musculus (Mouse), this protein is F-box-like/WD repeat-containing protein TBL1X (Tbl1x).